A 347-amino-acid chain; its full sequence is Anthranilate phosphoribosyltransferase (347 aa).

5-phospho-alpha-D-ribose 1-diphosphate is bound by residues Gly-82, 85–86 (GD), Thr-90, 92–95 (NIST), 110–118 (KHGNRAITS), and Thr-122. Gly-82 contacts anthranilate. Residue Ser-94 participates in Mg(2+) binding. Asn-113 contacts anthranilate. Arg-168 lines the anthranilate pocket. 2 residues coordinate Mg(2+): Asp-226 and Glu-227.

It belongs to the anthranilate phosphoribosyltransferase family. As to quaternary structure, homodimer. It depends on Mg(2+) as a cofactor.

It carries out the reaction N-(5-phospho-beta-D-ribosyl)anthranilate + diphosphate = 5-phospho-alpha-D-ribose 1-diphosphate + anthranilate. It participates in amino-acid biosynthesis; L-tryptophan biosynthesis; L-tryptophan from chorismate: step 2/5. In terms of biological role, catalyzes the transfer of the phosphoribosyl group of 5-phosphorylribose-1-pyrophosphate (PRPP) to anthranilate to yield N-(5'-phosphoribosyl)-anthranilate (PRA). In Caulobacter sp. (strain K31), this protein is Anthranilate phosphoribosyltransferase.